The primary structure comprises 154 residues: Nucleoside diphosphate kinase A1 (154 aa).

6 residues coordinate ATP: Lys-13, Phe-61, Arg-89, Thr-95, Arg-106, and Asn-116. The active-site Pros-phosphohistidine intermediate is His-119.

Belongs to the NDK family. Mg(2+) serves as cofactor.

The protein resides in the cytoplasm. It catalyses the reaction a 2'-deoxyribonucleoside 5'-diphosphate + ATP = a 2'-deoxyribonucleoside 5'-triphosphate + ADP. It carries out the reaction a ribonucleoside 5'-diphosphate + ATP = a ribonucleoside 5'-triphosphate + ADP. Its function is as follows. Major role in the synthesis of nucleoside triphosphates other than ATP. The ATP gamma phosphate is transferred to the NDP beta phosphate via a ping-pong mechanism, using a phosphorylated active-site intermediate. The protein is Nucleoside diphosphate kinase A1 of Xenopus laevis (African clawed frog).